The sequence spans 462 residues: 3-isopropylmalate dehydratase large subunit (462 aa).

Cys337, Cys397, and Cys400 together coordinate [4Fe-4S] cluster.

Belongs to the aconitase/IPM isomerase family. LeuC type 1 subfamily. In terms of assembly, heterodimer of LeuC and LeuD. [4Fe-4S] cluster serves as cofactor.

The catalysed reaction is (2R,3S)-3-isopropylmalate = (2S)-2-isopropylmalate. It participates in amino-acid biosynthesis; L-leucine biosynthesis; L-leucine from 3-methyl-2-oxobutanoate: step 2/4. Catalyzes the isomerization between 2-isopropylmalate and 3-isopropylmalate, via the formation of 2-isopropylmaleate. This is 3-isopropylmalate dehydratase large subunit from Listeria innocua serovar 6a (strain ATCC BAA-680 / CLIP 11262).